Reading from the N-terminus, the 517-residue chain is Cobyric acid synthase (517 aa).

In terms of domain architecture, GATase cobBQ-type spans 253–453 (EVEIAVIKLP…IHGILDNDSL (201 aa)). C334 serves as the catalytic Nucleophile. H445 is an active-site residue.

The protein belongs to the CobB/CobQ family. CobQ subfamily.

It functions in the pathway cofactor biosynthesis; adenosylcobalamin biosynthesis. In terms of biological role, catalyzes amidations at positions B, D, E, and G on adenosylcobyrinic A,C-diamide. NH(2) groups are provided by glutamine, and one molecule of ATP is hydrogenolyzed for each amidation. The chain is Cobyric acid synthase from Moorella thermoacetica (strain ATCC 39073 / JCM 9320).